A 373-amino-acid polypeptide reads, in one-letter code: Chloroperoxidase (373 aa).

Positions 1–20 are cleaved as a signal peptide; sequence MFSKVLPFVGAVAALPHSVR. Gln-21 bears the Pyrrolidone carboxylic acid mark. The N-linked (GlcNAc...) asparagine glycan is linked to Asn-33. Cys-50 lines the heme pocket. Cys-100 and Cys-108 are disulfide-bonded. An N-linked (GlcNAc...) asparagine glycan is attached at Asn-114. Mn(2+) is bound by residues Glu-125, His-126, and Ser-129. The active site involves Glu-204. The N-linked (GlcNAc...) asparagine glycan is linked to Asn-237. The O-linked (Man) threonine glycan is linked to Thr-259. O-linked (Man) serine glycans are attached at residues Ser-260, Ser-262, Ser-263, and Ser-269. Residue Thr-271 is glycosylated (O-linked (Man) threonine). Residue Ser-272 is glycosylated (O-linked (Man) serine). O-linked (Man) threonine glycosylation is present at Thr-273. O-linked (Man...) threonine glycans are attached at residues Thr-296, Thr-304, and Thr-314. Residues 322 to 373 constitute a propeptide that is removed on maturation; that stretch reads EAAPAATTSMAVFKNPYLEAIGTQDIKNQQAYVSSKAAAMASAMAANKARNL.

The protein belongs to the chloroperoxidase family. The cofactor is heme b. Mn(2+) is required as a cofactor. In terms of processing, N- and O-glycosylated.

It carries out the reaction RH + Cl(-) + H2O2 = RCl + 2 H2O.. Its function is as follows. Catalyzes peroxidative halogenations involved in the biosynthesis of clardariomycin (2,2-dichloro-1,3-cyclo-pentenedione). The enzyme also has potent catalase activity and in the absence of halide ion, acts as a peroxidase similar to plant peroxidases. This is Chloroperoxidase (CPO) from Leptoxyphium fumago (Caldariomyces fumago).